We begin with the raw amino-acid sequence, 281 residues long: Ras-related protein Rab-40C (281 aa).

Ser23, Gly26, Lys27, and Ser46 together coordinate GTP. Positions 41–49 (SPYAYSNGI) are switch-I. Mg(2+) contacts are provided by Ser46 and Asp69. Positions 72, 126, and 127 each coordinate GTP. The switch-II stretch occupies residues 72–88 (GQGRFCTIFRSYSRGAQ). Residues 175-228 (LMRHGMEKIWRPNRVFSLQDLCCRAIVSCTPVHLIDKLPLPVTIKSHLKSFSMA) enclose the SOCS box domain. The segment at 245–281 (SGAGGSGSKGNSLKRSKSIRPPQSPPQNCSRSNCKIS) is disordered. Residues 270 to 281 (PQNCSRSNCKIS) show a composition bias toward polar residues. A lipid anchor (S-palmitoyl cysteine) is attached at Cys273. Cys278 carries the S-geranylgeranyl cysteine lipid modification.

It belongs to the small GTPase superfamily. Rab family. In terms of assembly, component of the cullin-5-RING E3 ubiquitin-protein ligase complex (ECS(RAB40C) complex) composed of CUL5, Elongin BC (ELOB and ELOC), RNF7/RBX2 and RAB40C. Interacts with protein phosphatase 6 (PP6) complex components ANKRD28, ANKRD52, PPP6C, PP6R1 and PP6R2; the interaction leads to ANKRD28 ubiquitination and decreased PP6 activity. Interacts with DAB2IP; DAB2IP acts as a GAP for RAB40C. Requires Mg(2+) as cofactor.

It is found in the cell membrane. It localises to the cytoplasm. Its subcellular location is the cytosol. The protein localises to the golgi apparatus membrane. It carries out the reaction GTP + H2O = GDP + phosphate + H(+). It functions in the pathway protein modification; protein ubiquitination. Regulated by guanine nucleotide exchange factors (GEFs) which promote the exchange of bound GDP for free GTP. Regulated by GTPase activating proteins (GAPs) including DAB2IP, which increase the GTP hydrolysis activity. Inhibited by GDP dissociation inhibitors (GDIs). RAB40C small GTPase acts as substrate-recognition component of the ECS(RAB40C) E3 ubiquitin ligase complex which mediates the ubiquitination and subsequent proteasomal degradation of target proteins. The Rab40 subfamily belongs to the Rab family that are key regulators of intracellular membrane trafficking, from the formation of transport vesicles to their fusion with membranes. Rabs cycle between an inactive GDP-bound form and an active GTP-bound form that is able to recruit to membranes different sets of downstream effectors directly responsible for vesicle formation, movement, tethering and fusion. As part of the ECS(RAB40C) complex, mediates ANKRD28 ubiquitination and degradation, thereby inhibiting protein phosphatase 6 (PP6) complex activity and focal adhesion assembly during cell migration. Also negatively regulate lipid droplets accumulation in a GTP-dependent manner. The protein is Ras-related protein Rab-40C of Mus musculus (Mouse).